A 50-amino-acid chain; its full sequence is Bacteriocin-like protein SboX (50 aa).

The polypeptide is Bacteriocin-like protein SboX (sboX) (Bacillus subtilis (strain 168)).